Reading from the N-terminus, the 886-residue chain is Probable mixed-linked glucan synthase 8 (886 aa).

A run of 2 helical transmembrane segments spans residues 87 to 107 and 118 to 138; these read ILLHPYRLLTLVRLVAIVLFF and GMFFWWISVIGDFWFGVSWLL. Residue D213 is part of the active site. Substrate is bound by residues D413 and D415. Residue D577 is part of the active site. 6 helical membrane passes run 659 to 679, 683 to 703, 723 to 743, 775 to 795, 812 to 832, and 840 to 860; these read VFLLFYLLFPVIWIFRGIFYI, FPTYVLYLVIVIFMSEMIGMV, IIGATAVYPLAVLHIVLKCFG, LLFPTIVVIAVNICAIGAAIG, LGLVFNVWILLLIYPFALGIM, and YILFVLIVISFVIIALADIAI.

The protein belongs to the glycosyltransferase 2 family. Plant cellulose synthase-like F subfamily.

The protein resides in the golgi apparatus membrane. Its function is as follows. May catalyze both beta-1,3 and beta-1,4 glycosidic linkage on beta-D-glucan. Essential for (1,3;1,4)-beta-D-glucans synthesis in grasses and cereals (Poaceae). The mixed-linked glucans (which are not present in walls of dicotyledons or most other monocotyledonous plants) are particularly important constituents of the walls of the starchy endosperm and aleurone cells of cereal grains such as oats, wheat, rice and barley. They can account for up to 70% by weight of the wall. In Oryza sativa subsp. japonica (Rice), this protein is Probable mixed-linked glucan synthase 8 (CSFL8).